The following is a 67-amino-acid chain: Large ribosomal subunit protein uL30 (67 aa).

This sequence belongs to the universal ribosomal protein uL30 family. As to quaternary structure, part of the 50S ribosomal subunit.

In Thermotoga maritima (strain ATCC 43589 / DSM 3109 / JCM 10099 / NBRC 100826 / MSB8), this protein is Large ribosomal subunit protein uL30.